We begin with the raw amino-acid sequence, 221 residues long: Interleukin-12 subunit alpha (221 aa).

The first 25 residues, 1 to 25 (MCPLRSLLLISTLVLLHHLPHLSLG), serve as a signal peptide directing secretion. 3 disulfide bridges follow: Cys-39/Cys-112, Cys-66/Cys-198, and Cys-87/Cys-125. N-linked (GlcNAc...) asparagine glycosylation is present at Asn-95.

The protein belongs to the IL-6 superfamily. In terms of assembly, heterodimer with IL12B; disulfide-linked. This heterodimer is known as interleukin IL-12. Heterodimer with EBI3/IL27B; not disulfide-linked. This heterodimer is known as interleukin IL-35. Interacts with NBR1; this interaction promotes IL-12 secretion.

The protein resides in the secreted. Heterodimerizes with IL12B to form the IL-12 cytokine or with EBI3/IL27B to form the IL-35 cytokine. IL-12 is primarily produced by professional antigen-presenting cells (APCs) such as B-cells and dendritic cells (DCs) as well as macrophages and granulocytes and regulates T-cell and natural killer-cell responses, induces the production of interferon-gamma (IFN-gamma), favors the differentiation of T-helper 1 (Th1) cells and is an important link between innate resistance and adaptive immunity. Mechanistically, exerts its biological effects through a receptor composed of IL12R1 and IL12R2 subunits. Binding to the receptor results in the rapid tyrosine phosphorylation of a number of cellular substrates including the JAK family kinases TYK2 and JAK2. In turn, recruited STAT4 gets phosphorylated and translocates to the nucleus where it regulates cytokine/growth factor responsive genes. As part of IL-35, plays essential roles in maintaining the immune homeostasis of the liver microenvironment and also functions as an immune-suppressive cytokine. Mediates biological events through unconventional receptors composed of IL12RB2 and gp130/IL6ST heterodimers or homodimers. Signaling requires the transcription factors STAT1 and STAT4, which form a unique heterodimer that binds to distinct DNA sites. The protein is Interleukin-12 subunit alpha (IL12A) of Bubalus carabanensis (Swamp type water buffalo).